We begin with the raw amino-acid sequence, 238 residues long: tRNA1(Val) (adenine(37)-N6)-methyltransferase (238 aa).

The protein belongs to the methyltransferase superfamily. tRNA (adenine-N(6)-)-methyltransferase family.

Its subcellular location is the cytoplasm. It catalyses the reaction adenosine(37) in tRNA1(Val) + S-adenosyl-L-methionine = N(6)-methyladenosine(37) in tRNA1(Val) + S-adenosyl-L-homocysteine + H(+). In terms of biological role, specifically methylates the adenine in position 37 of tRNA(1)(Val) (anticodon cmo5UAC). This is tRNA1(Val) (adenine(37)-N6)-methyltransferase from Shewanella baltica (strain OS185).